The sequence spans 576 residues: Phosphoenolpyruvate-protein phosphotransferase (576 aa).

Residue histidine 189 is the Tele-phosphohistidine intermediate of the active site. Phosphoenolpyruvate-binding residues include arginine 296 and arginine 332. Residues glutamate 431 and aspartate 455 each contribute to the Mg(2+) site. Phosphoenolpyruvate is bound by residues 454 to 455 (ND) and arginine 465. The Proton donor role is filled by cysteine 502.

The protein belongs to the PEP-utilizing enzyme family. Homodimer. Mg(2+) serves as cofactor.

The protein resides in the cytoplasm. It carries out the reaction L-histidyl-[protein] + phosphoenolpyruvate = N(pros)-phospho-L-histidyl-[protein] + pyruvate. In terms of biological role, general (non sugar-specific) component of the phosphoenolpyruvate-dependent sugar phosphotransferase system (sugar PTS). This major carbohydrate active-transport system catalyzes the phosphorylation of incoming sugar substrates concomitantly with their translocation across the cell membrane. Enzyme I transfers the phosphoryl group from phosphoenolpyruvate (PEP) to the phosphoryl carrier protein (HPr). The polypeptide is Phosphoenolpyruvate-protein phosphotransferase (ptsI) (Buchnera aphidicola subsp. Baizongia pistaciae (strain Bp)).